The chain runs to 1227 residues: ATP-dependent helicase/nuclease subunit A (1227 aa).

Residues 37–503 form the UvrD-like helicase ATP-binding domain; it reads QKRTAEQIEA…ILLKENFRSQ (467 aa). ATP is bound at residue 58-65; sequence ASAGSGKT. The UvrD-like helicase C-terminal domain occupies 532–816; it reads SLVAGSPGQK…QLMTIHKSKG (285 aa).

This sequence belongs to the helicase family. AddA subfamily. In terms of assembly, heterodimer of AddA and AddB/RexB. The cofactor is Mg(2+).

It carries out the reaction Couples ATP hydrolysis with the unwinding of duplex DNA by translocating in the 3'-5' direction.. The catalysed reaction is ATP + H2O = ADP + phosphate + H(+). Functionally, the heterodimer acts as both an ATP-dependent DNA helicase and an ATP-dependent, dual-direction single-stranded exonuclease. Recognizes the chi site generating a DNA molecule suitable for the initiation of homologous recombination. The AddA nuclease domain is required for chi fragment generation; this subunit has the helicase and 3' -&gt; 5' nuclease activities. This is ATP-dependent helicase/nuclease subunit A from Streptococcus suis (strain 98HAH33).